The primary structure comprises 288 residues: Polyprenyl transferase eriF (288 aa).

6 helical membrane-spanning segments follow: residues 24–44 (ASII…TLPL), 51–71 (YIFL…LNQV), 101–121 (IAAF…LPET), 145–165 (CIAM…AISP), 215–235 (FIIT…GGIF), and 268–288 (FYTY…HGLI).

This sequence belongs to the UbiA prenyltransferase family. Mg(2+) is required as a cofactor.

The protein localises to the membrane. In terms of biological role, polyprenyl transferase; part of the gene cluster that mediates the biosynthesis of erinacines, cyathane-xylosides that show unique biological activities, including leishmanicidal activity, stimulating activity for nerve growth-factor synthesis, and agonistic activity toward the kappa opioid receptor. The role of eriF within the pathway has still to be determined. The first step of the erinacines biosynthesis pathway is catalyzed by the geranylgeranyl diphosphate (GGPP) synthase eriE via conversion of farnesyl pyrophosphate and isopentyl pyrophosphate into geranylgeranyl pyrophosphate (GGPP). GGPP is then substrate of the diterpene cyclase eriG for the production of cyatha-3,12-diene. The cytochrome P450 monooxygenase eriI then hydroxylates cyatha-3,12-diene at C-14 of the seven-membered ring to produce erinacol, which is further hydroxylated at C-15 by the cytochrome P450 monooxygenase eriC to yield cyathadiol. The cytochrome P450 monooxygenase eriA then catalyzes C-11 hydroxylation in the presence of the short chain dehydrogenase/reductase (SDR) eriH, which leads to the production of cyathatriol. The acetyltransferase eriL converts cyathatriol into 11-O-acetyl-cyathatriol. The SDR eriH catalyzes further oxidation of 11-O-acetyl-cyathatriol into 1-O-acetylcyathin A3. Finally, the glycosyl transferase eriJ tranfers xylose from UDP-xylose onto C-14 of 11-O-acetyl-cyathatriol to form eracine Q. EriJ is also able to convert 11-O-acetyl-cyathatriol to eracine Q2 by using UDP-D-glucose as cosubstrate, but at a lower rate. This chain is Polyprenyl transferase eriF, found in Hericium erinaceus (Lion's mane mushroom).